The chain runs to 208 residues: Large ribosomal subunit protein uL3 (208 aa).

Residues 122 to 148 form a disordered region; the sequence is KRHGQSRGPMAHGSRYHRRPGSMGPVA.

This sequence belongs to the universal ribosomal protein uL3 family. In terms of assembly, part of the 50S ribosomal subunit. Forms a cluster with proteins L14 and L19.

Its function is as follows. One of the primary rRNA binding proteins, it binds directly near the 3'-end of the 23S rRNA, where it nucleates assembly of the 50S subunit. The chain is Large ribosomal subunit protein uL3 from Streptococcus pyogenes serotype M1.